Reading from the N-terminus, the 1140-residue chain is MSYNYVVTAQKPTAVNGCVTGHFTSAEDLNLLIAKNTRLEIYVVTAEGLRPVKEVGMYGKIAVMELFRPKGESKDLLFILTAKYNACILEYKQSGESIDIITRAHGNVQDRIGRPSETGIIGIIDPECRMIGLRLYDGLFKVIPLDRDNKELKAFNIRLEELHVIDVKFLYGCQAPTICFVYQDPQGRHVKTYEVSLREKEFNKGPWKQENVEAEASMVIAVPEPFGGAIIIGQESITYHNGDKYLAIAPPIIKQSTIVCHNRVDPNGSRYLLGDMEGRLFMLLLEKEEQMDGTVTLKDLRVELLGETSIAECLTYLDNGVVFVGSRLGDSQLVKLNVDSNEQGSYVVAMETFTNLGPIVDMCVVDLERQGQGQLVTCSGAFKEGSLRIIRNGIGIHEHASIDLPGIKGLWPLRSDPGRETDDTLVLSFVGQTRVLMLNGEEVEETELMGFVDDQQTFFCGNVAHQQLIQITSASVRLVSQEPKALVSEWKEPQGKNISVASCNSSQVVVAVGRALYYLQIHPQELRQISHTEMEHEVACLDITPLGDSNGLSPLCAIGLWTDISARILKLPSFELLHKEMLGGEIIPRSILMTTFESSHYLLCALGDGALFYFGLNIETGLLSDRKKVTLGTQPTVLRTFRSLSTTNVFACSDRPTVIYSSNHKLVFSNVNLKEVNYMCPLNSDGYPDSLALANNSTLTIGTIDEIQKLHIRTVPLYESPRKICYQEVSQCFGVLSSRIEVQDSSGGTTALRPSASTQALSSSVSSSKLFSSSTAPHETSFGEEVEVHNLLIIDQHTFEVLHAHQFLQNEYALSLVSCKLGKDPNTYFIVGTAMVYPEEAEPKQGRIVVFQYSDGKLQTVAEKEVKGAVYSMVEFNGKLLASINSTVRLYEWTTEKELRTECNHYNNIMALYLKTKGDFILVGDLMRSVLLLAYKPMEGNFEEIARDFNPNWMSAVEILDDDNFLGAENAFNLFVCQKDSAATTDEERQHLQEVGLFHLGEFVNVFCHGSLVMQNLGEASTPTQGSVLFGTVNGMIGLVTSLSESWYNLLLDMQNRLNKVIKSVGKIEHSFWRSFHTERKTEPATGFIDGDLIESFLDISRPKMQEVVANLQYDDGSGMKREATADDLIKVVEELTRIH.

Ser2 is modified (N-acetylserine). The interval 2 to 768 is interaction with CDT1; that stretch reads SYNYVVTAQK…QALSSSVSSS (767 aa). Residues 13–356 form a WD repeat beta-propeller A region; the sequence is TAVNGCVTGH…VVAMETFTNL (344 aa). The interval 391-708 is WD repeat beta-propeller B; Interaction with CUL4A; that stretch reads RNGIGIHEHA…LTIGTIDEIQ (318 aa). Residues 709–1043 are WD repeat beta-propeller C; that stretch reads KLHIRTVPLY…NGMIGLVTSL (335 aa). Residues 771–1140 are interaction with CDT1 and CUL4A; that stretch reads FSSSTAPHET…KVVEELTRIH (370 aa). Lys1067 bears the N6-acetyllysine mark. A Glycyl lysine isopeptide (Lys-Gly) (interchain with G-Cter in SUMO2) cross-link involves residue Lys1121. Position 1125 is a phosphothreonine (Thr1125).

The protein belongs to the DDB1 family. As to quaternary structure, component of the UV-DDB complex which includes DDB1 and DDB2; the heterodimer dimerizes to give rise to a heterotetramer when bound to damaged DNA. The UV-DDB complex interacts with monoubiquitinated histone H2A and binds to XPC via the DDB2 subunit. Component of numerous DCX (DDB1-CUL4-X-box) E3 ubiquitin-protein ligase complexes which consist of a core of DDB1, CUL4A or CUL4B and RBX1. DDB1 may recruit specific substrate targeting subunits to the DCX complex. These substrate targeting subunits are generally known as DCAF (DDB1- and CUL4-associated factor) or CDW (CUL4-DDB1-associated WD40-repeat) proteins. Interacts with AMBRA1, ATG16L1, BTRC, CRBN, DCAF1, DCAF4, DCAF5, DCAF6, DCAF7, DCAF8, DCAF9, DCAF10, DCAF11, DCAF12, DCAF15, DCAF16, DCAF17, DDA1, DET1, DTL, ERCC8, FBXW5, FBXW8, GRWD1, KATNB1, NLE1, NUP43, PAFAH1B1, PHIP, PWP1, RBBP4, RBBP5, RBBP7, COP1, SNRNP40, DCAF1, WDR5, WDR5B, WDR12, WDR26, WDR39, WDR42, WDR53, WDR59, WDR61, WSB1, WSB2, LRWD1 and WDTC1. DCX complexes may associate with the COP9 signalosome, and this inhibits the E3 ubiquitin-protein ligase activity of the complex. Interacts with NF2, TSC1 and TSC2. Interacts with AGO1 and AGO2. Associates with the E3 ligase complex containing DYRK2, EDD/UBR5, DDB1 and DCAF1 proteins (EDVP complex). Interacts directly with DYRK2. DCX(DTL) complex interacts with FBXO11; does not ubiquitinate and degradate FBXO11. Interacts with TRPC4AP. Interacts with CRY1 and CRY2. The DDB1-CUL4A complex interacts with CRY1. Component of the DCX(DCAF13) E3 ubiquitin ligase complex, at least composed of CUL4 (CUL4A or CUL4B), DDB1, DCAF13 and RBX1. Interacts with DCAF13 (via WD40 domain). Phosphorylated by ABL1. In terms of processing, ubiquitinated by CUL4A. Subsequently degraded by ubiquitin-dependent proteolysis. Post-translationally, acetylated, promoting interaction with CUL4 (CUL4A or CUL4B) and subsequent formation of DCX (DDB1-CUL4-X-box) E3 ubiquitin-protein ligase complexes. Deacetylation by SIRT7 impairs the interaction with CUL4 (CUL4A or CUL4B) and formation of DCX (DDB1-CUL4-X-box) E3 ubiquitin-protein ligase complexes. As to expression, widely expressed. Expressed in pregnant, lactating and involuting mammary gland. Expressed in oocytes (at protein level).

It localises to the cytoplasm. The protein localises to the nucleus. It participates in protein modification; protein ubiquitination. Its function is as follows. Protein, which is both involved in DNA repair and protein ubiquitination, as part of the UV-DDB complex and DCX (DDB1-CUL4-X-box) complexes, respectively. Core component of the UV-DDB complex (UV-damaged DNA-binding protein complex), a complex that recognizes UV-induced DNA damage and recruit proteins of the nucleotide excision repair pathway (the NER pathway) to initiate DNA repair. The UV-DDB complex preferentially binds to cyclobutane pyrimidine dimers (CPD), 6-4 photoproducts (6-4 PP), apurinic sites and short mismatches. Also functions as a component of numerous distinct DCX (DDB1-CUL4-X-box) E3 ubiquitin-protein ligase complexes which mediate the ubiquitination and subsequent proteasomal degradation of target proteins. The functional specificity of the DCX E3 ubiquitin-protein ligase complex is determined by the variable substrate recognition component recruited by DDB1. DCX(DDB2) (also known as DDB1-CUL4-ROC1, CUL4-DDB-ROC1 and CUL4-DDB-RBX1) may ubiquitinate histone H2A, histone H3 and histone H4 at sites of UV-induced DNA damage. The ubiquitination of histones may facilitate their removal from the nucleosome and promote subsequent DNA repair. DCX(DDB2) also ubiquitinates XPC, which may enhance DNA-binding by XPC and promote NER. DCX(DTL) plays a role in PCNA-dependent polyubiquitination of CDT1 and MDM2-dependent ubiquitination of TP53 in response to radiation-induced DNA damage and during DNA replication. DCX(ERCC8) (the CSA complex) plays a role in transcription-coupled repair (TCR). The DDB1-CUL4A-DTL E3 ligase complex regulates the circadian clock function by mediating the ubiquitination and degradation of CRY1. DDB1-mediated CRY1 degradation promotes FOXO1 protein stability and FOXO1-mediated gluconeogenesis in the liver. By acting on TET dioxygenses, essential for oocyte maintenance at the primordial follicle stage, hence essential for female fertility. Maternal factor required for proper zygotic genome activation and genome reprogramming. This chain is DNA damage-binding protein 1 (Ddb1), found in Mus musculus (Mouse).